Here is a 132-residue protein sequence, read N- to C-terminus: S-protein homolog 8 (132 aa).

The N-terminal stretch at 1 to 20 is a signal peptide; that stretch reads MHSLSWFLLVIGLSVGLSSG.

The protein belongs to the plant self-incompatibility (S1) protein family. Mostly expressed in seedlings, stems, leaves and floral tissues, and, to a lower extent, in roots.

The protein resides in the secreted. In Arabidopsis thaliana (Mouse-ear cress), this protein is S-protein homolog 8.